A 1358-amino-acid chain; its full sequence is Phosphoribosylformylglycinamidine synthase (1358 aa).

An N-acetylthreonine modification is found at Thr-2. The tract at residues 339 to 363 (AVSPFPGAATGSGGEIRDEGATGRG) is disordered. Residues 345 to 356 (GAATGSGGEIRD), 424 to 426 (NGY), and Ala-719 each bind ATP. Positions 720, 762, 766, and 930 each coordinate Mg(2+). Ser-932 contacts ATP. The region spanning 1093 to 1358 (VAILREQGVN…LFRSARRWVG (266 aa)) is the Glutamine amidotransferase type-1 domain. Cys-1187 functions as the Nucleophile in the catalytic mechanism. Catalysis depends on residues His-1319 and Glu-1321.

It in the N-terminal section; belongs to the FGAMS family.

Its subcellular location is the cytoplasm. It catalyses the reaction N(2)-formyl-N(1)-(5-phospho-beta-D-ribosyl)glycinamide + L-glutamine + ATP + H2O = 2-formamido-N(1)-(5-O-phospho-beta-D-ribosyl)acetamidine + L-glutamate + ADP + phosphate + H(+). It functions in the pathway purine metabolism; IMP biosynthesis via de novo pathway; 5-amino-1-(5-phospho-D-ribosyl)imidazole from N(2)-formyl-N(1)-(5-phospho-D-ribosyl)glycinamide: step 1/2. Its function is as follows. Phosphoribosylformylglycinamidine synthase involved in the purines biosynthetic pathway. Catalyzes the ATP-dependent conversion of formylglycinamide ribonucleotide (FGAR) and glutamine to yield formylglycinamidine ribonucleotide (FGAM) and glutamate. The polypeptide is Phosphoribosylformylglycinamidine synthase (ADE6) (Saccharomyces cerevisiae (strain ATCC 204508 / S288c) (Baker's yeast)).